A 328-amino-acid chain; its full sequence is Aspartate carbamoyltransferase catalytic subunit (328 aa).

Arg-55 and Thr-56 together coordinate carbamoyl phosphate. Lys-83 lines the L-aspartate pocket. 3 residues coordinate carbamoyl phosphate: Arg-105, His-135, and Gln-138. L-aspartate is bound by residues Arg-176 and Arg-230. Carbamoyl phosphate contacts are provided by Gly-271 and Pro-272.

It belongs to the aspartate/ornithine carbamoyltransferase superfamily. ATCase family. In terms of assembly, heterododecamer (2C3:3R2) of six catalytic PyrB chains organized as two trimers (C3), and six regulatory PyrI chains organized as three dimers (R2).

It carries out the reaction carbamoyl phosphate + L-aspartate = N-carbamoyl-L-aspartate + phosphate + H(+). It participates in pyrimidine metabolism; UMP biosynthesis via de novo pathway; (S)-dihydroorotate from bicarbonate: step 2/3. Its function is as follows. Catalyzes the condensation of carbamoyl phosphate and aspartate to form carbamoyl aspartate and inorganic phosphate, the committed step in the de novo pyrimidine nucleotide biosynthesis pathway. This is Aspartate carbamoyltransferase catalytic subunit from Streptomyces griseus subsp. griseus (strain JCM 4626 / CBS 651.72 / NBRC 13350 / KCC S-0626 / ISP 5235).